The following is a 751-amino-acid chain: Oxysterol-binding protein-related protein 11 (751 aa).

Met-1 is modified (N-acetylmethionine). The interval 1–57 (MQGGEPASVMKVSESEGKLEGLATAVTPNKNSGNSSCGGAISSSSSNSSRGGSAKGW) is disordered. Ser-15 bears the Phosphoserine mark. Thr-27 bears the Phosphothreonine mark. Positions 31 to 52 (NSGNSSCGGAISSSSSNSSRGG) are enriched in low complexity. In terms of domain architecture, PH spans 63–160 (MESVNGYLMK…WVSRLQICTQ (98 aa)). 6 positions are modified to phosphoserine: Ser-177, Ser-179, Ser-182, Ser-186, Ser-189, and Ser-194. Disordered regions lie at residues 475-497 (SGVS…EEAP) and 694-716 (EIDK…ERLR).

This sequence belongs to the OSBP family. In terms of assembly, heterodimer with OSBPL9.

It localises to the late endosome membrane. The protein localises to the golgi apparatus. It is found in the trans-Golgi network membrane. The catalysed reaction is a 1,2-diacyl-sn-glycero-3-phospho-(1D-myo-inositol 4-phosphate)(out) + a 1,2-diacyl-sn-glycero-3-phospho-L-serine(in) = a 1,2-diacyl-sn-glycero-3-phospho-(1D-myo-inositol 4-phosphate)(in) + a 1,2-diacyl-sn-glycero-3-phospho-L-serine(out). Functionally, plays a role in regulating ADIPOQ and FABP4 levels in differentiating adipocytes and is also involved in regulation of adipocyte triglyceride storage. Weakly binds 25-hydroxycholesterol. Interacts with OSBPL9 to function as lipid transfer proteins. Together they form a heterodimer that localizes at the ER-trans-Golgi membrane contact sites, and exchanges phosphatidylserine (1,2-diacyl-sn-glycero-3-phospho-L-serine, PS) for phosphatidylinositol-4-phosphate (1,2-diacyl-sn-glycero-3-phospho-(1D-myo-inositol 4-phosphate), PI(4)P) between the two organelles, a step that is critical for sphingomyelin synthesis in the Golgi complex. The chain is Oxysterol-binding protein-related protein 11 (Osbpl11) from Mus musculus (Mouse).